The chain runs to 298 residues: Protoheme IX farnesyltransferase (298 aa).

The next 9 membrane-spanning stretches (helical) occupy residues 26–46 (VVSL…PGAV), 52–72 (IFGT…NCLV), 93–113 (VSVP…LFML), 120–140 (LTMW…TVIL), 148–168 (IVIG…AVTG), 174–194 (ALLL…ALAL), 219–239 (LHVL…YLTQ), 241–261 (SGLI…YYAI), and 278–298 (YSIA…YFYF).

Belongs to the UbiA prenyltransferase family. Protoheme IX farnesyltransferase subfamily.

It localises to the cell inner membrane. It carries out the reaction heme b + (2E,6E)-farnesyl diphosphate + H2O = Fe(II)-heme o + diphosphate. It functions in the pathway porphyrin-containing compound metabolism; heme O biosynthesis; heme O from protoheme: step 1/1. Functionally, converts heme B (protoheme IX) to heme O by substitution of the vinyl group on carbon 2 of heme B porphyrin ring with a hydroxyethyl farnesyl side group. The chain is Protoheme IX farnesyltransferase from Nitrosomonas europaea (strain ATCC 19718 / CIP 103999 / KCTC 2705 / NBRC 14298).